The primary structure comprises 350 residues: Phosphoribosylformylglycinamidine cyclo-ligase (350 aa).

It belongs to the AIR synthase family.

It localises to the cytoplasm. The catalysed reaction is 2-formamido-N(1)-(5-O-phospho-beta-D-ribosyl)acetamidine + ATP = 5-amino-1-(5-phospho-beta-D-ribosyl)imidazole + ADP + phosphate + H(+). Its pathway is purine metabolism; IMP biosynthesis via de novo pathway; 5-amino-1-(5-phospho-D-ribosyl)imidazole from N(2)-formyl-N(1)-(5-phospho-D-ribosyl)glycinamide: step 2/2. The sequence is that of Phosphoribosylformylglycinamidine cyclo-ligase from Syntrophotalea carbinolica (strain DSM 2380 / NBRC 103641 / GraBd1) (Pelobacter carbinolicus).